The following is a 453-amino-acid chain: Gamma-aminobutyric acid receptor subunit alpha-6 (453 aa).

Positions 1–19 (MLLLLPWLFSLLWIENAQA) are cleaved as a signal peptide. Residues 20–243 (QLEDEGNFYS…FHLQRKMGYF (224 aa)) lie on the Extracellular side of the membrane. Asparagine 31 is a glycosylation site (N-linked (GlcNAc...) asparagine). 4-aminobutanoate is bound at residue arginine 84. 2 N-linked (GlcNAc...) asparagine glycosylation sites follow: asparagine 128 and asparagine 141. Position 147 (threonine 147) interacts with 4-aminobutanoate. Cysteines 156 and 170 form a disulfide. Residues 244–264 (MIQIYTPCIMTVILSQVSFWI) form a helical membrane-spanning segment. At 265–270 (NKESVP) the chain is on the cytoplasmic side. Residues 271-290 (ARTVFGITTVLTMTTLSISA) traverse the membrane as a helical segment. Residues 291-304 (RHSLPKVSYATAMD) are Extracellular-facing. Residues 305 to 325 (WFIAVCFAFVFSALIEFAAVN) form a helical membrane-spanning segment. Topologically, residues 326–422 (YFTNLQSQKA…GTSKIDQYSR (97 aa)) are cytoplasmic. Serine 375 carries the post-translational modification Phosphoserine. The residue at position 403 (threonine 403) is a Phosphothreonine. Residues 423–443 (ILFPVAFAGFNLVYWIVYLSK) traverse the membrane as a helical segment. The Extracellular segment spans residues 444-453 (DTMEVSSTVE).

The protein belongs to the ligand-gated ion channel (TC 1.A.9) family. Gamma-aminobutyric acid receptor (TC 1.A.9.5) subfamily. GABRA6 sub-subfamily. In terms of assembly, heteropentamer, formed by a combination of alpha (GABRA1-6), beta (GABRB1-3), gamma (GABRG1-3), delta (GABRD), epsilon (GABRE), rho (GABRR1-3), pi (GABRP) and theta (GABRQ) chains, each subunit exhibiting distinct physiological and pharmacological properties. Binds UBQLN1. In terms of tissue distribution, expressed in brain, in cerebellar granule cells.

Its subcellular location is the postsynaptic cell membrane. It is found in the cell membrane. It carries out the reaction chloride(in) = chloride(out). In terms of biological role, alpha subunit of the heteropentameric ligand-gated chloride channel gated by gamma-aminobutyric acid (GABA), a major inhibitory neurotransmitter in the brain. GABA-gated chloride channels, also named GABA(A) receptors (GABAAR), consist of five subunits arranged around a central pore and contain GABA active binding site(s) located at the alpha and beta subunit interface(s). When activated by GABA, GABAARs selectively allow the flow of chloride anions across the cell membrane down their electrochemical gradient. Alpha-6/GABRA6 subunits are found at both synaptic and extrasynaptic sites. Chloride influx into the postsynaptic neuron following GABAAR opening decreases the neuron ability to generate a new action potential, thereby reducing nerve transmission. Extrasynaptic alpha-6-containing receptors contribute to the tonic GABAergic inhibition. Alpha-6 subunits are also present on glutamatergic synapses. The chain is Gamma-aminobutyric acid receptor subunit alpha-6 from Rattus norvegicus (Rat).